The following is a 302-amino-acid chain: Sulfate adenylyltransferase subunit 2 (302 aa).

The protein belongs to the PAPS reductase family. CysD subfamily. Heterodimer composed of CysD, the smaller subunit, and CysN.

It carries out the reaction sulfate + ATP + H(+) = adenosine 5'-phosphosulfate + diphosphate. Its pathway is sulfur metabolism; hydrogen sulfide biosynthesis; sulfite from sulfate: step 1/3. In terms of biological role, with CysN forms the ATP sulfurylase (ATPS) that catalyzes the adenylation of sulfate producing adenosine 5'-phosphosulfate (APS) and diphosphate, the first enzymatic step in sulfur assimilation pathway. APS synthesis involves the formation of a high-energy phosphoric-sulfuric acid anhydride bond driven by GTP hydrolysis by CysN coupled to ATP hydrolysis by CysD. The protein is Sulfate adenylyltransferase subunit 2 of Xanthomonas oryzae pv. oryzae (strain MAFF 311018).